Consider the following 308-residue polypeptide: MFADSAVACVISALRAVGVDSPLMSELVPRLLFVHAHPDDETLTTGGTIAHYVRRGADVRVVTCTLGEEGEVIGEQYAQLAVDHADQLGGYRIAELTAALAALGVDAPHFLGGPGHWRDSGMADTPARHQPRFVDADMAEAAGLLAAILDDFRPHVVVTYDPDGGYGHPDHVQTHRVTTAAVERAQWQVPKFYWTVMSRSGMGDAFAVARDVPEEWLQVSVDDVPFLYTDDRIDAVVDVSDSIEAKVAAMRAHATQISVAANGQSCALSNNIAMPIPGVEHYVLVSGAPGPRDARGWETDLLAGVNLA.

Zn(2+) contacts are provided by His-37, Asp-40, and His-171.

This sequence belongs to the MshB deacetylase family. Requires Zn(2+) as cofactor.

It catalyses the reaction 1D-myo-inositol 2-acetamido-2-deoxy-alpha-D-glucopyranoside + H2O = 1D-myo-inositol 2-amino-2-deoxy-alpha-D-glucopyranoside + acetate. In terms of biological role, catalyzes the deacetylation of 1D-myo-inositol 2-acetamido-2-deoxy-alpha-D-glucopyranoside (GlcNAc-Ins) in the mycothiol biosynthesis pathway. In Mycobacterium sp. (strain KMS), this protein is 1D-myo-inositol 2-acetamido-2-deoxy-alpha-D-glucopyranoside deacetylase.